A 160-amino-acid polypeptide reads, in one-letter code: Ubiquitin-like protein 4A (160 aa).

Residues 1 to 76 (MQLTVKALQG…LNLVVKPLEK (76 aa)) enclose the Ubiquitin-like domain. Residue K48 forms a Glycyl lysine isopeptide (Lys-Gly) (interchain with G-Cter in ubiquitin) linkage. A required and sufficient for interaction with BAG6 region spans residues 99–141 (WQLIAKVLARHFSAADASRVLDQLQRDYERSLSRLTLDDIERL).

Component of the BAG6/BAT3 complex, at least composed of BAG6, UBL4A and GET4/TRC35. Interacts with BAG6; the interaction is direct and required for UBL4A protein stability. Interacts with USP13; may be indirect via BAG6. Post-translationally, polyubiquitinated. Ubiquitination by AMFR and deubiquitination by USP13 may regulate the interaction between the BAG6/BAT complex and SGTA and therefore may regulate client proteins fate.

It is found in the cytoplasm. The protein localises to the cytosol. It localises to the nucleus. As part of a cytosolic protein quality control complex, the BAG6/BAT3 complex, maintains misfolded and hydrophobic patches-containing proteins in a soluble state and participates in their proper delivery to the endoplasmic reticulum or alternatively can promote their sorting to the proteasome where they undergo degradation. The BAG6/BAT3 complex is involved in the post-translational delivery of tail-anchored/type II transmembrane proteins to the endoplasmic reticulum membrane. Recruited to ribosomes, it interacts with the transmembrane region of newly synthesized tail-anchored proteins and together with SGTA and ASNA1 mediates their delivery to the endoplasmic reticulum. Client proteins that cannot be properly delivered to the endoplasmic reticulum are ubiquitinated and sorted to the proteasome. Similarly, the BAG6/BAT3 complex also functions as a sorting platform for proteins of the secretory pathway that are mislocalized to the cytosol either delivering them to the proteasome for degradation or to the endoplasmic reticulum. The BAG6/BAT3 complex also plays a role in the endoplasmic reticulum-associated degradation (ERAD), a quality control mechanism that eliminates unwanted proteins of the endoplasmic reticulum through their retrotranslocation to the cytosol and their targeting to the proteasome. It maintains these retrotranslocated proteins in an unfolded yet soluble state condition in the cytosol to ensure their proper delivery to the proteasome. The protein is Ubiquitin-like protein 4A (UBL4A) of Rhinolophus ferrumequinum (Greater horseshoe bat).